The chain runs to 484 residues: Phosphomethylpyrimidine synthase (484 aa).

Substrate is bound by residues asparagine 97, methionine 126, tyrosine 156, histidine 192, 212–214, 253–256, and glutamate 292; these read SRG and DSLR. Residue histidine 296 coordinates Zn(2+). Substrate is bound at residue tyrosine 319. Histidine 360 provides a ligand contact to Zn(2+). 3 residues coordinate [4Fe-4S] cluster: cysteine 440, cysteine 443, and cysteine 448.

The protein belongs to the ThiC family. The cofactor is [4Fe-4S] cluster.

It catalyses the reaction 5-amino-1-(5-phospho-beta-D-ribosyl)imidazole + S-adenosyl-L-methionine = 4-amino-2-methyl-5-(phosphooxymethyl)pyrimidine + CO + 5'-deoxyadenosine + formate + L-methionine + 3 H(+). It participates in cofactor biosynthesis; thiamine diphosphate biosynthesis. In terms of biological role, catalyzes the synthesis of the hydroxymethylpyrimidine phosphate (HMP-P) moiety of thiamine from aminoimidazole ribotide (AIR) in a radical S-adenosyl-L-methionine (SAM)-dependent reaction. In Synechococcus sp. (strain CC9605), this protein is Phosphomethylpyrimidine synthase.